The following is a 356-amino-acid chain: Dihydroorotate dehydrogenase (quinone) (356 aa).

FMN-binding positions include 67-71 (AGFDK) and Thr-91. Lys-71 is a substrate binding site. A substrate-binding site is contributed by 116–120 (NRMGF). Residues Asn-153 and Asn-186 each contribute to the FMN site. Position 186 (Asn-186) interacts with substrate. Ser-189 (nucleophile) is an active-site residue. Residue Asn-191 participates in substrate binding. Residues Lys-228 and Thr-256 each contribute to the FMN site. 257-258 (NT) contributes to the substrate binding site. Residues Gly-282, Gly-311, and 332 to 333 (YT) contribute to the FMN site.

It belongs to the dihydroorotate dehydrogenase family. Type 2 subfamily. Monomer. The cofactor is FMN.

It localises to the cell membrane. It catalyses the reaction (S)-dihydroorotate + a quinone = orotate + a quinol. It functions in the pathway pyrimidine metabolism; UMP biosynthesis via de novo pathway; orotate from (S)-dihydroorotate (quinone route): step 1/1. Functionally, catalyzes the conversion of dihydroorotate to orotate with quinone as electron acceptor. The sequence is that of Dihydroorotate dehydrogenase (quinone) from Pseudarthrobacter chlorophenolicus (strain ATCC 700700 / DSM 12829 / CIP 107037 / JCM 12360 / KCTC 9906 / NCIMB 13794 / A6) (Arthrobacter chlorophenolicus).